We begin with the raw amino-acid sequence, 89 residues long: MKLTCVPIVAMLFLMACQLITADYSREKHGYSAEKSSDKIQDSFYSKLTKRCTDEGGDCDPGNHNCCRGSCLVLQHKAVCGILYTMVSR.

The first 22 residues, 1–22, serve as a signal peptide directing secretion; that stretch reads MKLTCVPIVAMLFLMACQLITA. A propeptide spanning residues 23-50 is cleaved from the precursor; it reads DYSREKHGYSAEKSSDKIQDSFYSKLTK. 3 disulfides stabilise this stretch: Cys52–Cys67, Cys59–Cys71, and Cys66–Cys80.

Belongs to the conotoxin O1 superfamily. In terms of tissue distribution, expressed by the venom duct.

It is found in the secreted. This is Conotoxin Lt6.4 from Conus litteratus (Lettered cone).